Consider the following 177-residue polypeptide: Large ribosomal subunit protein uL6 (177 aa).

The protein belongs to the universal ribosomal protein uL6 family. Part of the 50S ribosomal subunit.

This protein binds to the 23S rRNA, and is important in its secondary structure. It is located near the subunit interface in the base of the L7/L12 stalk, and near the tRNA binding site of the peptidyltransferase center. This Acinetobacter baumannii (strain SDF) protein is Large ribosomal subunit protein uL6.